Here is an 85-residue protein sequence, read N- to C-terminus: Acyl carrier protein ScoB (85 aa).

Positions 1 to 77 (MPAPLTLDGF…QWWQLLSARQ (77 aa)) constitute a Carrier domain. Ser-38 carries the O-(pantetheine 4'-phosphoryl)serine modification.

The protein belongs to the acyl carrier protein (ACP) family. The cofactor is pantetheine 4'-phosphate.

It functions in the pathway lipid metabolism; fatty acid metabolism. Its function is as follows. Acyl-carrier protein (ACP) involved in the biosynthesis of a unique class of isonitrile lipopeptides (INLPs). Is the dedicated ACP for the loading of activated acyl groups catalyzed by ScoC. This is Acyl carrier protein ScoB from Streptomyces coeruleorubidus.